Consider the following 498-residue polypeptide: N-acyl-D-aspartate deacylase (498 aa).

The disordered stretch occupies residues 478–498 (AERPGQVLAPGDAIPWSQQSE).

It belongs to the metallo-dependent hydrolases superfamily. N-acyl-D-amino-acid deacylase family. The cofactor is Zn(2+).

The protein resides in the cytoplasm. It catalyses the reaction an N-acyl-D-aspartate + H2O = D-aspartate + a carboxylate. This chain is N-acyl-D-aspartate deacylase, found in Alcaligenes xylosoxydans xylosoxydans (Achromobacter xylosoxidans).